The following is a 198-amino-acid chain: Peptidyl-tRNA hydrolase (198 aa).

Position 17 (Tyr17) interacts with tRNA. The active-site Proton acceptor is the His22. 3 residues coordinate tRNA: Tyr74, Asn76, and Asn122.

This sequence belongs to the PTH family. As to quaternary structure, monomer.

It localises to the cytoplasm. The catalysed reaction is an N-acyl-L-alpha-aminoacyl-tRNA + H2O = an N-acyl-L-amino acid + a tRNA + H(+). Functionally, hydrolyzes ribosome-free peptidyl-tRNAs (with 1 or more amino acids incorporated), which drop off the ribosome during protein synthesis, or as a result of ribosome stalling. Catalyzes the release of premature peptidyl moieties from peptidyl-tRNA molecules trapped in stalled 50S ribosomal subunits, and thus maintains levels of free tRNAs and 50S ribosomes. The protein is Peptidyl-tRNA hydrolase of Kineococcus radiotolerans (strain ATCC BAA-149 / DSM 14245 / SRS30216).